The primary structure comprises 679 residues: Glycine--tRNA ligase beta subunit (679 aa).

It belongs to the class-II aminoacyl-tRNA synthetase family. As to quaternary structure, tetramer of two alpha and two beta subunits.

The protein localises to the cytoplasm. It carries out the reaction tRNA(Gly) + glycine + ATP = glycyl-tRNA(Gly) + AMP + diphosphate. The sequence is that of Glycine--tRNA ligase beta subunit from Streptococcus pyogenes serotype M12 (strain MGAS9429).